The following is a 727-amino-acid chain: NADH-ubiquinone oxidoreductase 75 kDa subunit, mitochondrial (727 aa).

The N-terminal 23 residues, 1–23 (MLRIPVRKALVGLSKSPKGCVRT), are a transit peptide targeting the mitochondrion. The region spanning 30–108 (NLIEVFVDGQ…GWNILTNSEK (79 aa)) is the 2Fe-2S ferredoxin-type domain. Residues C64, C75, and C78 each coordinate [2Fe-2S] cluster. K84 carries the post-translational modification N6-acetyllysine. C92 is a binding site for [2Fe-2S] cluster. The 4Fe-4S His(Cys)3-ligated-type domain maps to 108 to 147 (KSKKAREGVMEFLLANHPLDCPICDQGGECDLQDQSMMFG). The [4Fe-4S] cluster site is built by H124, C128, C131, C137, C176, C179, C182, and C226. One can recognise a 4Fe-4S Mo/W bis-MGD-type domain in the interval 245-301 (TRKTESIDVMDAVGSNIVVSTRTGEVMRILPRMHEDINEXWISDKTRFAYDGLKRQR). Residues K467, K499, and K709 each carry the N6-acetyllysine modification.

It belongs to the complex I 75 kDa subunit family. As to quaternary structure, core subunit of respiratory chain NADH dehydrogenase (Complex I) which is composed of 45 different subunits. This is the largest subunit of complex I and it is a component of the iron-sulfur (IP) fragment of the enzyme. Complex I associates with ubiquinol-cytochrome reductase complex (Complex III) to form supercomplexes. Interacts with MDM2 and AKAP1. It depends on [2Fe-2S] cluster as a cofactor. The cofactor is [4Fe-4S] cluster.

The protein resides in the mitochondrion inner membrane. The enzyme catalyses a ubiquinone + NADH + 5 H(+)(in) = a ubiquinol + NAD(+) + 4 H(+)(out). Functionally, core subunit of the mitochondrial membrane respiratory chain NADH dehydrogenase (Complex I) which catalyzes electron transfer from NADH through the respiratory chain, using ubiquinone as an electron acceptor. Essential for catalysing the entry and efficient transfer of electrons within complex I. Plays a key role in the assembly and stability of complex I and participates in the association of complex I with ubiquinol-cytochrome reductase complex (Complex III) to form supercomplexes. The chain is NADH-ubiquinone oxidoreductase 75 kDa subunit, mitochondrial (NDUFS1) from Gorilla gorilla gorilla (Western lowland gorilla).